The chain runs to 468 residues: Arginine biosynthesis bifunctional protein ArgJ, mitochondrial (468 aa).

A mitochondrion-targeting transit peptide spans Met1–Phe23. Thr198, Lys227, Thr238, Glu324, Asn463, and Thr468 together coordinate substrate. Thr238 (nucleophile) is an active-site residue.

The protein belongs to the ArgJ family. As to quaternary structure, heterodimer of an alpha and a beta chain. Post-translationally, the alpha and beta chains are autoproteolytically processed from a single precursor protein within the mitochondrion.

It localises to the mitochondrion matrix. It carries out the reaction N(2)-acetyl-L-ornithine + L-glutamate = N-acetyl-L-glutamate + L-ornithine. It catalyses the reaction L-glutamate + acetyl-CoA = N-acetyl-L-glutamate + CoA + H(+). Its pathway is amino-acid biosynthesis; L-arginine biosynthesis; L-ornithine and N-acetyl-L-glutamate from L-glutamate and N(2)-acetyl-L-ornithine (cyclic): step 1/1. It participates in amino-acid biosynthesis; L-arginine biosynthesis; N(2)-acetyl-L-ornithine from L-glutamate: step 1/4. In terms of biological role, catalyzes two activities which are involved in the cyclic version of arginine biosynthesis: the synthesis of acetylglutamate from glutamate and acetyl-CoA, and of ornithine by transacetylation between acetylornithine and glutamate. The chain is Arginine biosynthesis bifunctional protein ArgJ, mitochondrial from Podospora anserina (strain S / ATCC MYA-4624 / DSM 980 / FGSC 10383) (Pleurage anserina).